The chain runs to 209 residues: Kynurenine formamidase (209 aa).

Position 18 (Phe-18) interacts with substrate. Positions 48, 52, and 54 each coordinate Zn(2+). The active-site Proton donor/acceptor is His-58. Residues His-160 and Glu-172 each contribute to the Zn(2+) site.

This sequence belongs to the Cyclase 1 superfamily. KynB family. Homodimer. Zn(2+) serves as cofactor.

The catalysed reaction is N-formyl-L-kynurenine + H2O = L-kynurenine + formate + H(+). Its pathway is amino-acid degradation; L-tryptophan degradation via kynurenine pathway; L-kynurenine from L-tryptophan: step 2/2. Its function is as follows. Catalyzes the hydrolysis of N-formyl-L-kynurenine to L-kynurenine, the second step in the kynurenine pathway of tryptophan degradation. The sequence is that of Kynurenine formamidase from Bordetella petrii (strain ATCC BAA-461 / DSM 12804 / CCUG 43448).